We begin with the raw amino-acid sequence, 467 residues long: 3-isopropylmalate dehydratase large subunit (467 aa).

Residues Cys-347, Cys-407, and Cys-410 each contribute to the [4Fe-4S] cluster site.

The protein belongs to the aconitase/IPM isomerase family. LeuC type 1 subfamily. As to quaternary structure, heterodimer of LeuC and LeuD. It depends on [4Fe-4S] cluster as a cofactor.

The enzyme catalyses (2R,3S)-3-isopropylmalate = (2S)-2-isopropylmalate. The protein operates within amino-acid biosynthesis; L-leucine biosynthesis; L-leucine from 3-methyl-2-oxobutanoate: step 2/4. Its function is as follows. Catalyzes the isomerization between 2-isopropylmalate and 3-isopropylmalate, via the formation of 2-isopropylmaleate. The sequence is that of 3-isopropylmalate dehydratase large subunit from Gloeothece citriformis (strain PCC 7424) (Cyanothece sp. (strain PCC 7424)).